An 87-amino-acid polypeptide reads, in one-letter code: Defensin-like protein 100 (87 aa).

An N-terminal signal peptide occupies residues 1 to 29; the sequence is MRSLRLRTVVVATIVVCLSVLLSPTEVDG. Disulfide bonds link cysteine 31-cysteine 79, cysteine 38-cysteine 64, cysteine 44-cysteine 76, and cysteine 48-cysteine 78.

Belongs to the DEFL family.

It localises to the secreted. This chain is Defensin-like protein 100, found in Arabidopsis thaliana (Mouse-ear cress).